A 115-amino-acid chain; its full sequence is MEIEKNYRINSLFEFYEPLLTNKQKAYIQLYYADDYSLGEIAAEFSVSRQAVYDNIKRTEKILEGYEAKLHLYHDFVERNHEVDAISDYIKQNYHGDTQLIKMIQQLVNLEADSE.

This sequence belongs to the UPF0122 family.

In terms of biological role, might take part in the signal recognition particle (SRP) pathway. This is inferred from the conservation of its genetic proximity to ftsY/ffh. May be a regulatory protein. The polypeptide is UPF0122 protein lp_1634 (Lactiplantibacillus plantarum (strain ATCC BAA-793 / NCIMB 8826 / WCFS1) (Lactobacillus plantarum)).